A 286-amino-acid chain; its full sequence is Main hemagglutinin component type C (286 aa).

A 1-alpha repeat occupies 2 to 55 (SQTNANDLRNNEVFFISPSNNTNKVLDKISQSEVKLWNKLSGANQKWRLIYDTN). Ricin B-type lectin domains follow at residues 12–140 (NEVF…FKFS) and 180–284 (DSSR…WIIN). The stretch at 56–100 (KQAYKIKVMDNTSLILTWNAPLSSVSVKTDTNGDNQYWYLLQNYI) is one 1-beta repeat. The 1-gamma repeat unit spans residues 101–148 (SRNVIIRNYMNPNLVLQYNIDDTLMVSTQTSSSNQFFKFSNCIYEALN). A 2-alpha repeat occupies 149–193 (NRNCKLQTQLNSDRFLSKNLNSQIIVLWQWFDSSRQKWIIEYNET). Positions 167 to 183 (NLNSQIIVLWQWFDSSR) are sugar-binding site 1. The stretch at 194-239 (KSAYTLKCQENNRYLTWIQNSNNYVETYQSTDSLIQYWNINYLDND) is one 2-beta repeat. A 2-gamma repeat occupies 240-286 (ASKYILYNLQDTNRVLDVYNSQIANGTHVIVDSYHGNTNQQWIINLI). Residues 256–279 (DVYNSQIANGTHVIVDSYHGNTNQ) form a sugar-binding site 2 region.

Botulinum toxins are produced as progenitor toxins of large molecular sizes of 12S (M toxin) and 16S (L toxin). M toxin consists of a non-toxic, non-hemagglutinin component (NTNHA) and the neurotoxin. L toxin consists of the M toxin and the 3 subcomponents of hemagglutinin (HA). HA is composed of subcomponents of 70, 33, and 17 kDa. The 70 kDa subcomponent undergoes proteolytic processing and is split into HA-55 (also called HA-53 and HA3b) and HA-22-23 (also called HA3a). The stoichiometry of the whole complex has been modeled as one BoNT/C, one NTNHA, three HA-70, six HA-33 and three HA-17.

It is found in the secreted. Agglutinates human erythrocytes. The hemagglutinin (HA) component of the progenitor toxin protects the structural integrity of botulinum neurotoxin; may increase internalization of the neurotoxin into the bloodstream of the host. The hemagglutinin (HA) component is involved in binding to the upper small intestine through interactions with glycolipids and glycoproteins containing sialic acid moieties. Binds galactose or oligosaccharides with galactose at their non-reducing end. Binds eukaryotic host mucins; binding is inhibited by N-acetyl-beta-neuraminic acid, N-acetyl-D-galactosamine, galactose, and methyl N-acetyl-beta-neuraminic acid. Binds N-acetyl-beta-neuraminic acid, N-acetyl-D-galactosamine and galactose (but not glucose) via 2 sites. The polypeptide is Main hemagglutinin component type C (Clostridium botulinum C (Clostridium botulinum C bacteriophage)).